The chain runs to 381 residues: uncharacterized protein (381 aa).

A run of 11 helical transmembrane segments spans residues 10-29, 75-93, 98-117, 130-147, 157-179, 199-221, 236-255, 262-284, 289-311, 323-340, and 355-374; these read IFFSLFGIFIFSCINAINFY, IILISLSLLIICTINLIIL, LIKINFILINFGIFSYFTSR, YLFLACIILLWAGGNLMV, TNNTIVICALLYCINILTEFLHY, IELQLLTGFVVSYITLNILWYYE, LILKYIFLTICFAIIPICYI, YFANLSLNIILLICFILLPIHGT, NILYIILIGNCLGAIFICNILIL, ALLSYFSMCSIGIYAGAL, and LFSVFAVVGSFVTYHFWYFI.

Its subcellular location is the cell membrane. This is an uncharacterized protein from Rickettsia prowazekii (strain Madrid E).